We begin with the raw amino-acid sequence, 488 residues long: E3 ubiquitin-protein ligase XIAP (488 aa).

3 BIR repeats span residues 40 to 105 (RLAS…KFIN), 176 to 241 (RLQT…YFVL), and 266 to 329 (RLET…QFLI). Cys-298, Cys-301, His-318, and Cys-325 together coordinate Zn(2+). Residues 441–476 (CKVCMDRRITIVFIPCGHLVACAVCADVLDKCPICC) form an RING-type zinc finger.

It belongs to the IAP family. As to quaternary structure, monomer, and homodimer. In terms of processing, degraded in a 2-step mechanism; a caspase-independent first step and a caspase-dependent second step. Stabilized indirectly by MAPK, which acts to delay caspase activation, rather than directly phosphorylating xiap.

Its subcellular location is the cytoplasm. It is found in the nucleus. It catalyses the reaction S-ubiquitinyl-[E2 ubiquitin-conjugating enzyme]-L-cysteine + [acceptor protein]-L-lysine = [E2 ubiquitin-conjugating enzyme]-L-cysteine + N(6)-ubiquitinyl-[acceptor protein]-L-lysine.. Functionally, multi-functional protein which regulates not only caspases and apoptosis, but also acts as an E3 ubiquitin-protein ligase mediating ubiquitination and subsequent proteasomal degradation of its target proteins. Acts as a direct caspase inhibitor. E3 ubiquitin-protein ligase that acts as an important regulator of innate immunity by mediating 'Lys-63'-linked polyubiquitination of ripk2 downstream of NOD1 and NOD2, thereby transforming ripk2 into a scaffolding protein for downstream effectors, ultimately leading to activation of the NF-kappa-B and MAP kinases signaling. A key apoptotic suppressor in eggs. Acts as a positive regulator of Wnt signaling. This is E3 ubiquitin-protein ligase XIAP (xiap) from Xenopus laevis (African clawed frog).